A 159-amino-acid chain; its full sequence is Growth arrest and DNA damage-inducible protein GADD45 gamma (159 aa).

The interval 43 to 86 (VYESAKVLNVDPDNVTFCVLAADEEDEGDIALQIHFTLIQAFCC) is homodimerization.

Belongs to the GADD45 family. Undergoes concentration-dependent homodimerization, which is required for growth inhibititory activity and enhances interaction with PCNA. Interacts with GADD45GIP1. Interacts with PCNA.

Involved in the regulation of growth and apoptosis. Mediates activation of stress-responsive MTK1/MEKK4 MAPKKK. The protein is Growth arrest and DNA damage-inducible protein GADD45 gamma (Gadd45g) of Rattus norvegicus (Rat).